Reading from the N-terminus, the 506-residue chain is Maturase K (506 aa).

It belongs to the intron maturase 2 family. MatK subfamily.

Its subcellular location is the plastid. It is found in the chloroplast. In terms of biological role, usually encoded in the trnK tRNA gene intron. Probably assists in splicing its own and other chloroplast group II introns. The protein is Maturase K of Rhododendron ferrugineum (Alpenrose).